Reading from the N-terminus, the 135-residue chain is Small ribosomal subunit protein uS9 (135 aa).

Positions 96-135 (SADNRKPLKTEGHLSRDPRAKERRKYGLKKARKAPQFSKR) are disordered. Positions 97 to 115 (ADNRKPLKTEGHLSRDPRA) are enriched in basic and acidic residues. Residues 116–135 (KERRKYGLKKARKAPQFSKR) show a composition bias toward basic residues.

It belongs to the universal ribosomal protein uS9 family.

This Prochlorococcus marinus (strain MIT 9313) protein is Small ribosomal subunit protein uS9.